We begin with the raw amino-acid sequence, 685 residues long: Linoleate 9/13-lipoxygenase (685 aa).

A signal peptide spans 1 to 19 (MKRRSVLLSGVALSGTALA). The Lipoxygenase domain maps to 122–685 (ASLPASAAAQ…PSRIPASTNI (564 aa)). Positions 377, 382, 555, 559, and 685 each coordinate Fe cation.

It belongs to the lipoxygenase family. As to quaternary structure, monomer. Fe cation serves as cofactor.

It localises to the periplasm. The catalysed reaction is (9Z,12Z)-octadecadienoate + O2 = (9S)-hydroperoxy-(10E,12Z)-octadecadienoate. It carries out the reaction (9Z)-octadecenoate + O2 = (8E,10S)-10-hydroperoxy-octadeca-8-enoate. It catalyses the reaction (9Z,12Z)-octadecadienoate + O2 = (8E,10S,12Z)-10-hydroperoxyoctadeca-8,12-dienoate. The enzyme catalyses (9Z,12Z,15Z)-octadecatrienoate + O2 = (8E,10S,12Z,15Z)-10-hydroperoxyoctadeca-8,12,15-trienoate. The catalysed reaction is (9Z,12Z)-octadecadienoate + O2 = (13S)-hydroperoxy-(9Z,11E)-octadecadienoate. It carries out the reaction (9Z,12Z,15Z)-octadecatrienoate + O2 = (13S)-hydroperoxy-(9Z,11E,15Z)-octadecatrienoate. With respect to regulation, inhibited by Ba(2+), Zn(2+) and Fe(3+). Functionally, in presence of oxygen, converts linoleate into (9S)-hydroperoxy-10,12-octadecenoate (9HPOD), which spontaneously decomposes to the corresponding 9-hydroxy-10,12-octadecenoate (9HOD), and into 13-hydroperoxy-9,11-octadecenoate (13HPOD) which spontaneously decomposes to the corresponding 13-hydroxy-9,11-octadecenoate (13HOD). Also active on linolenate. To a lesser extent, is also able to convert oleate into (10S)-hydroperoxy-8E-octadecenoate, which spontaneously decomposes to the corresponding 10-hydroxy-8E-octadecenoate. Is almost not active on arachidonate. In Pseudomonas aeruginosa, this protein is Linoleate 9/13-lipoxygenase (lox).